Here is a 206-residue protein sequence, read N- to C-terminus: Large ribosomal subunit protein uL4 (206 aa).

The tract at residues 63–93 is disordered; sequence MYKQKGTGRARHHSARAPQFRGGGKAHGPVV. A compositionally biased stretch (basic residues) spans 64-77; it reads YKQKGTGRARHHSA.

Belongs to the universal ribosomal protein uL4 family. As to quaternary structure, part of the 50S ribosomal subunit.

One of the primary rRNA binding proteins, this protein initially binds near the 5'-end of the 23S rRNA. It is important during the early stages of 50S assembly. It makes multiple contacts with different domains of the 23S rRNA in the assembled 50S subunit and ribosome. Its function is as follows. Forms part of the polypeptide exit tunnel. The sequence is that of Large ribosomal subunit protein uL4 from Sinorhizobium medicae (strain WSM419) (Ensifer medicae).